A 453-amino-acid chain; its full sequence is Probable glycine dehydrogenase (decarboxylating) subunit 1 (453 aa).

This sequence belongs to the GcvP family. N-terminal subunit subfamily. The glycine cleavage system is composed of four proteins: P, T, L and H. In this organism, the P 'protein' is a heterodimer of two subunits.

The catalysed reaction is N(6)-[(R)-lipoyl]-L-lysyl-[glycine-cleavage complex H protein] + glycine + H(+) = N(6)-[(R)-S(8)-aminomethyldihydrolipoyl]-L-lysyl-[glycine-cleavage complex H protein] + CO2. The glycine cleavage system catalyzes the degradation of glycine. The P protein binds the alpha-amino group of glycine through its pyridoxal phosphate cofactor; CO(2) is released and the remaining methylamine moiety is then transferred to the lipoamide cofactor of the H protein. This is Probable glycine dehydrogenase (decarboxylating) subunit 1 from Dictyoglomus thermophilum (strain ATCC 35947 / DSM 3960 / H-6-12).